An 89-amino-acid polypeptide reads, in one-letter code: Small ribosomal subunit protein uS15 (89 aa).

Belongs to the universal ribosomal protein uS15 family. Part of the 30S ribosomal subunit. Forms a bridge to the 50S subunit in the 70S ribosome, contacting the 23S rRNA.

One of the primary rRNA binding proteins, it binds directly to 16S rRNA where it helps nucleate assembly of the platform of the 30S subunit by binding and bridging several RNA helices of the 16S rRNA. In terms of biological role, forms an intersubunit bridge (bridge B4) with the 23S rRNA of the 50S subunit in the ribosome. This is Small ribosomal subunit protein uS15 from Haemophilus influenzae (strain 86-028NP).